A 208-amino-acid polypeptide reads, in one-letter code: Probable molybdenum cofactor guanylyltransferase (208 aa).

Residues 12-14 (IAG), Lys24, Asp72, and Asp101 each bind GTP. Position 101 (Asp101) interacts with Mg(2+).

It belongs to the MobA family. Mg(2+) is required as a cofactor.

Its subcellular location is the cytoplasm. It catalyses the reaction Mo-molybdopterin + GTP + H(+) = Mo-molybdopterin guanine dinucleotide + diphosphate. Functionally, transfers a GMP moiety from GTP to Mo-molybdopterin (Mo-MPT) cofactor (Moco or molybdenum cofactor) to form Mo-molybdopterin guanine dinucleotide (Mo-MGD) cofactor. The polypeptide is Probable molybdenum cofactor guanylyltransferase (Chloroflexus aggregans (strain MD-66 / DSM 9485)).